The primary structure comprises 250 residues: DNA repair protein RecO (250 aa).

This sequence belongs to the RecO family.

Functionally, involved in DNA repair and RecF pathway recombination. The protein is DNA repair protein RecO of Staphylococcus aureus (strain MRSA252).